The following is a 367-amino-acid chain: Ferrochelatase (367 aa).

Positions 226 and 307 each coordinate Fe cation.

It belongs to the ferrochelatase family.

The protein resides in the cytoplasm. It carries out the reaction heme b + 2 H(+) = protoporphyrin IX + Fe(2+). The protein operates within porphyrin-containing compound metabolism; protoheme biosynthesis; protoheme from protoporphyrin-IX: step 1/1. In terms of biological role, catalyzes the ferrous insertion into protoporphyrin IX. This chain is Ferrochelatase, found in Burkholderia pseudomallei (strain 1106a).